The chain runs to 213 residues: Neuromodulin (213 aa).

The tract at residues 1–213 (MLCCIRRTKP…AEEAGKDQNV (213 aa)) is disordered. S-palmitoyl cysteine attachment occurs at residues cysteine 3 and cysteine 4. Over residues 9 to 33 (KPVEKNEEADQEIKQDGTKPEENAH) the composition is skewed to basic and acidic residues. The IQ domain occupies 32–61 (AHKAATKIQASFRGHITRKKMKDEDKDGEN). Residues 57-73 (KDGENDTAPDESAETEE) are compositionally biased toward acidic residues. Residues 74-86 (KEERVSPSEEKPV) show a composition bias toward basic and acidic residues. Residues 102–122 (PNSPAAEAPPTAATDSAPSDT) are compositionally biased toward low complexity. A compositionally biased stretch (acidic residues) spans 157–169 (EKEEEEEEEEEEE). Over residues 191–213 (QTDKKEALDDSKPAEEAGKDQNV) the composition is skewed to basic and acidic residues.

It belongs to the neuromodulin family. As to quaternary structure, binds calmodulin with a greater affinity in the absence of Ca(2+) than in its presence. Palmitoylated. Palmitoylation is essential for plasma membrane association.

It is found in the cell membrane. The protein localises to the cell projection. Its subcellular location is the growth cone membrane. The protein resides in the synapse. It localises to the filopodium membrane. In terms of biological role, this protein is associated with nerve growth. It is a major component of the motile 'growth cones' that form the tips of elongating axons. Plays a role in axonal and dendritic filopodia induction. The chain is Neuromodulin (gap43) from Carassius auratus (Goldfish).